The sequence spans 124 residues: Small ribosomal subunit protein uS12 (124 aa).

Position 89 is a 3-methylthioaspartic acid (Asp-89). The disordered stretch occupies residues 102-124; it reads LDTSGVNNRKHGRSKYGTKRPKS. A compositionally biased stretch (basic residues) spans 109–124; sequence NRKHGRSKYGTKRPKS.

Belongs to the universal ribosomal protein uS12 family. In terms of assembly, part of the 30S ribosomal subunit. Contacts proteins S8 and S17. May interact with IF1 in the 30S initiation complex.

In terms of biological role, with S4 and S5 plays an important role in translational accuracy. Functionally, interacts with and stabilizes bases of the 16S rRNA that are involved in tRNA selection in the A site and with the mRNA backbone. Located at the interface of the 30S and 50S subunits, it traverses the body of the 30S subunit contacting proteins on the other side and probably holding the rRNA structure together. The combined cluster of proteins S8, S12 and S17 appears to hold together the shoulder and platform of the 30S subunit. The sequence is that of Small ribosomal subunit protein uS12 from Francisella tularensis subsp. tularensis (strain FSC 198).